The chain runs to 495 residues: Telomere-binding protein subunit alpha (495 aa).

Over residues 1-13 (MSTAAKQNRSTSR) the composition is skewed to polar residues. The disordered stretch occupies residues 1–31 (MSTAAKQNRSTSRVSKKKTAAPKEGAAKKSD).

Belongs to the telombin family. In terms of assembly, heterodimer of an alpha and a beta subunit.

The protein resides in the nucleus. Its subcellular location is the chromosome. It is found in the telomere. Functionally, may function as protective capping of the single-stranded telomeric overhang. May also participate in telomere length regulation during DNA replication. Binds specifically to the T4G4-containing extension on the 3'strand and protects this region of the telomere from nuclease digestion and chemical modification. The sequence is that of Telomere-binding protein subunit alpha (MAC-56A) from Sterkiella nova (Ciliate).